Here is a 97-residue protein sequence, read N- to C-terminus: UPF0235 protein PFL_5841 (97 aa).

This sequence belongs to the UPF0235 family.

The polypeptide is UPF0235 protein PFL_5841 (Pseudomonas fluorescens (strain ATCC BAA-477 / NRRL B-23932 / Pf-5)).